The chain runs to 302 residues: Dermonecrotic toxin LiSicTox-alphaIA2bii (302 aa).

The signal sequence occupies residues 1–14 (IALILVCWSVLSQA). Positions 15–22 (AQTDVEGR) are excised as a propeptide. Residue histidine 34 is part of the active site. Mg(2+) is bound by residues glutamate 54 and aspartate 56. Catalysis depends on histidine 70, which acts as the Nucleophile. Intrachain disulfides connect cysteine 74–cysteine 80 and cysteine 76–cysteine 219. Aspartate 114 lines the Mg(2+) pocket. A glycan (N-linked (GlcNAc...) asparagine) is linked at asparagine 279.

It belongs to the arthropod phospholipase D family. Class II subfamily. Requires Mg(2+) as cofactor. As to expression, expressed by the venom gland.

It is found in the secreted. It catalyses the reaction an N-(acyl)-sphingosylphosphocholine = an N-(acyl)-sphingosyl-1,3-cyclic phosphate + choline. The enzyme catalyses an N-(acyl)-sphingosylphosphoethanolamine = an N-(acyl)-sphingosyl-1,3-cyclic phosphate + ethanolamine. The catalysed reaction is a 1-acyl-sn-glycero-3-phosphocholine = a 1-acyl-sn-glycero-2,3-cyclic phosphate + choline. It carries out the reaction a 1-acyl-sn-glycero-3-phosphoethanolamine = a 1-acyl-sn-glycero-2,3-cyclic phosphate + ethanolamine. In terms of biological role, dermonecrotic toxins cleave the phosphodiester linkage between the phosphate and headgroup of certain phospholipids (sphingolipid and lysolipid substrates), forming an alcohol (often choline) and a cyclic phosphate. This toxin acts on sphingomyelin (SM). It may also act on ceramide phosphoethanolamine (CPE), lysophosphatidylcholine (LPC) and lysophosphatidylethanolamine (LPE), but not on lysophosphatidylserine (LPS), and lysophosphatidylglycerol (LPG). It acts by transphosphatidylation, releasing exclusively cyclic phosphate products as second products. Induces dermonecrosis, hemolysis, increased vascular permeability, edema, inflammatory response, and platelet aggregation. The chain is Dermonecrotic toxin LiSicTox-alphaIA2bii from Loxosceles intermedia (Brown spider).